The following is a 342-amino-acid chain: S-adenosylmethionine:tRNA ribosyltransferase-isomerase (342 aa).

This sequence belongs to the QueA family. Monomer.

Its subcellular location is the cytoplasm. The catalysed reaction is 7-aminomethyl-7-carbaguanosine(34) in tRNA + S-adenosyl-L-methionine = epoxyqueuosine(34) in tRNA + adenine + L-methionine + 2 H(+). Its pathway is tRNA modification; tRNA-queuosine biosynthesis. Transfers and isomerizes the ribose moiety from AdoMet to the 7-aminomethyl group of 7-deazaguanine (preQ1-tRNA) to give epoxyqueuosine (oQ-tRNA). The polypeptide is S-adenosylmethionine:tRNA ribosyltransferase-isomerase (Streptococcus sanguinis (strain SK36)).